The primary structure comprises 519 residues: 2,3-bisphosphoglycerate-independent phosphoglycerate mutase (519 aa).

2 residues coordinate Mn(2+): Asp-18 and Ser-68. Ser-68 serves as the catalytic Phosphoserine intermediate. Residues His-129, 159 to 160, Arg-191, Arg-197, 267 to 270, and Lys-341 contribute to the substrate site; these read RD and RADR. Residues Asp-408, His-412, Asp-449, His-450, and His-468 each coordinate Mn(2+).

Belongs to the BPG-independent phosphoglycerate mutase family. Monomer. Mn(2+) is required as a cofactor.

The catalysed reaction is (2R)-2-phosphoglycerate = (2R)-3-phosphoglycerate. It participates in carbohydrate degradation; glycolysis; pyruvate from D-glyceraldehyde 3-phosphate: step 3/5. In terms of biological role, catalyzes the interconversion of 2-phosphoglycerate and 3-phosphoglycerate. The polypeptide is 2,3-bisphosphoglycerate-independent phosphoglycerate mutase (Coxiella burnetii (strain RSA 331 / Henzerling II)).